A 337-amino-acid polypeptide reads, in one-letter code: Casein kinase II subunit alpha (337 aa).

Residues 47–332 (YEIIRKIGRG…TREAMEHPYF (286 aa)) form the Protein kinase domain. ATP contacts are provided by residues 53-61 (IGRGKYSEV) and K76. D164 acts as the Proton acceptor in catalysis.

Belongs to the protein kinase superfamily. CMGC Ser/Thr protein kinase family. CK2 subfamily. In terms of assembly, tetramer of two alpha and two beta chains.

It carries out the reaction L-seryl-[protein] + ATP = O-phospho-L-seryl-[protein] + ADP + H(+). It catalyses the reaction L-threonyl-[protein] + ATP = O-phospho-L-threonyl-[protein] + ADP + H(+). Its function is as follows. Casein kinases are operationally defined by their preferential utilization of acidic proteins such as caseins as substrates. The alpha chain contains the catalytic site. The protein is Casein kinase II subunit alpha (casK) of Dictyostelium discoideum (Social amoeba).